Consider the following 456-residue polypeptide: E3 ubiquitin-protein ligase PUB24 (456 aa).

A U-box domain is found at 9–83 (EIPNYFICPI…QHWCVENETR (75 aa)).

In terms of processing, auto-ubiquitinated.

The catalysed reaction is S-ubiquitinyl-[E2 ubiquitin-conjugating enzyme]-L-cysteine + [acceptor protein]-L-lysine = [E2 ubiquitin-conjugating enzyme]-L-cysteine + N(6)-ubiquitinyl-[acceptor protein]-L-lysine.. It functions in the pathway protein modification; protein ubiquitination. In terms of biological role, E3 ubiquitin-protein ligase that acts as a negative regulator of the immunity triggered by the pathogen-associated molecular patterns (PAMPs), in association with PUB22 and PUB23. In Arabidopsis thaliana (Mouse-ear cress), this protein is E3 ubiquitin-protein ligase PUB24 (PUB24).